The primary structure comprises 553 residues: MDIKRTVLWVIFFMSAVMLYDNWQRDHGRPSMFFPSATHTAPAAAGGASGTGATTTAGDVPAAAAGAAPSTTAPAAQAQLVKFSTDVYDGEIDTRGGTLAKLTLKKQGDGKQPDLYITLFDHTAGHTYLARTGLLGGDFPNHNDVYTQLNPGSTSLTGDQNTLKLSFESPVKGGVKVVKTYTFTRGSYVIGVDTKIDNVGTAPVTPTVYMELVRDNTAVETPMFSHTFLGPAVYTDAKHFQKIDFSDLDKNKANFEKSADNGWVAMVQHYFASAWIPQQGAKRDIYAEKIDPALYRVGVKQPVAAIAPGQSADVQARLFAGPEEERMLEGIAPGLELVKDYGWVTIIAKPLFWLLEKIHGYVGNWGWAIVLLTVLIKAVFFPLSAASYKSMARMKEITPRMQALRERFKSDPQKMNAALMELYKTEKVNPFGGCLPVVIQIPVFISLYWVLLASVEMRGAPWILWIHDLSQRDPFFILPVLMAVSMFVQTSLNPTPPDPVQAKMMKFMPIAFSVMFFFFPAGLVLYYVVNNVLSIAQQYYITRKLGGVKKKPA.

Helical transmembrane passes span 7-24 (VLWV…DNWQ), 365-385 (WGWA…PLSA), 435-455 (LPVV…LASV), 474-494 (PFFI…SLNP), and 509-529 (PIAF…YYVV).

This sequence belongs to the OXA1/ALB3/YidC family. Type 1 subfamily. Interacts with the Sec translocase complex via SecD. Specifically interacts with transmembrane segments of nascent integral membrane proteins during membrane integration.

Its subcellular location is the cell inner membrane. In terms of biological role, required for the insertion and/or proper folding and/or complex formation of integral membrane proteins into the membrane. Involved in integration of membrane proteins that insert both dependently and independently of the Sec translocase complex, as well as at least some lipoproteins. Aids folding of multispanning membrane proteins. This Burkholderia orbicola (strain MC0-3) protein is Membrane protein insertase YidC.